Consider the following 369-residue polypeptide: Histidinol-phosphate aminotransferase (369 aa).

Positions 1 to 39 (MSFGIDDLPVRDELRGKSPYGAPQLDVPVRLNTNENPYP) are disordered. K230 carries the N6-(pyridoxal phosphate)lysine modification.

The protein belongs to the class-II pyridoxal-phosphate-dependent aminotransferase family. Histidinol-phosphate aminotransferase subfamily. In terms of assembly, homodimer. Pyridoxal 5'-phosphate is required as a cofactor.

It carries out the reaction L-histidinol phosphate + 2-oxoglutarate = 3-(imidazol-4-yl)-2-oxopropyl phosphate + L-glutamate. It functions in the pathway amino-acid biosynthesis; L-histidine biosynthesis; L-histidine from 5-phospho-alpha-D-ribose 1-diphosphate: step 7/9. In Streptomyces avermitilis (strain ATCC 31267 / DSM 46492 / JCM 5070 / NBRC 14893 / NCIMB 12804 / NRRL 8165 / MA-4680), this protein is Histidinol-phosphate aminotransferase (hisC).